Here is a 261-residue protein sequence, read N- to C-terminus: Pyridoxine-5'-phosphate oxidase (261 aa).

A pyridoxal 5'-phosphate-binding site is contributed by 42–45 (RGDP). 95-98 (RMVL) contacts FMN. A pyridoxal 5'-phosphate-binding site is contributed by lysine 100. FMN-binding positions include 110–111 (FT), 116–117 (RK), and glutamine 139. Pyridoxal 5'-phosphate contacts are provided by tyrosine 157, arginine 161, and serine 165. Residues 174–175 (QS) and tryptophan 219 each bind FMN. Residue 225-227 (RLH) participates in pyridoxal 5'-phosphate binding. An FMN-binding site is contributed by arginine 229. Position 238 is a phosphothreonine (threonine 238). At serine 241 the chain carries Phosphoserine.

Belongs to the pyridoxamine 5'-phosphate oxidase family. In terms of assembly, homodimer. The cofactor is FMN.

It catalyses the reaction pyridoxamine 5'-phosphate + O2 + H2O = pyridoxal 5'-phosphate + H2O2 + NH4(+). The enzyme catalyses pyridoxine 5'-phosphate + O2 = pyridoxal 5'-phosphate + H2O2. It participates in cofactor metabolism; pyridoxal 5'-phosphate salvage; pyridoxal 5'-phosphate from pyridoxamine 5'-phosphate: step 1/1. Its pathway is cofactor metabolism; pyridoxal 5'-phosphate salvage; pyridoxal 5'-phosphate from pyridoxine 5'-phosphate: step 1/1. Functionally, catalyzes the oxidation of either pyridoxine 5'-phosphate (PNP) or pyridoxamine 5'-phosphate (PMP) into pyridoxal 5'-phosphate (PLP). This chain is Pyridoxine-5'-phosphate oxidase (PNPO), found in Bos taurus (Bovine).